The following is a 456-amino-acid chain: tRNA modification GTPase MnmE (456 aa).

Positions 29, 87, and 126 each coordinate (6S)-5-formyl-5,6,7,8-tetrahydrofolate. The TrmE-type G domain occupies 222 to 380 (GYKLAIIGRP…LLSLLASWLD (159 aa)). K(+) is bound at residue Asn-232. GTP-binding positions include 232 to 237 (NVGKSS), 251 to 257 (SDIPGTT), and 276 to 279 (DTAG). Ser-236 lines the Mg(2+) pocket. Residues Ser-251, Ile-253, and Thr-256 each coordinate K(+). Position 257 (Thr-257) interacts with Mg(2+). Position 456 (Lys-456) interacts with (6S)-5-formyl-5,6,7,8-tetrahydrofolate.

The protein belongs to the TRAFAC class TrmE-Era-EngA-EngB-Septin-like GTPase superfamily. TrmE GTPase family. As to quaternary structure, homodimer. Heterotetramer of two MnmE and two MnmG subunits. It depends on K(+) as a cofactor.

It localises to the cytoplasm. In terms of biological role, exhibits a very high intrinsic GTPase hydrolysis rate. Involved in the addition of a carboxymethylaminomethyl (cmnm) group at the wobble position (U34) of certain tRNAs, forming tRNA-cmnm(5)s(2)U34. The sequence is that of tRNA modification GTPase MnmE from Wolinella succinogenes (strain ATCC 29543 / DSM 1740 / CCUG 13145 / JCM 31913 / LMG 7466 / NCTC 11488 / FDC 602W) (Vibrio succinogenes).